An 82-amino-acid chain; its full sequence is Putative antitoxin VapB23 (82 aa).

Putative antitoxin component of a possible type II toxin-antitoxin (TA) system. The cognate toxin is VapC23. In Mycobacterium tuberculosis (strain ATCC 25618 / H37Rv), this protein is Putative antitoxin VapB23 (vapB23).